Reading from the N-terminus, the 121-residue chain is Neuromedin-B (121 aa).

Positions 1 to 24 are cleaved as a signal peptide; that stretch reads MARRAGGARMFGSLLLFALLAAGV. Met-56 carries the post-translational modification Methionine amide. Residues 60–121 constitute a propeptide that is removed on maturation; that stretch reads SLEPSSPSPL…RRLLVQILQK (62 aa).

The protein belongs to the bombesin/neuromedin-B/ranatensin family.

Its subcellular location is the secreted. The protein localises to the cell projection. It is found in the neuron projection. Stimulates smooth muscle contraction. Induces sighing by acting directly on the pre-Botzinger complex, a cluster of several thousand neurons in the ventrolateral medulla responsible for inspiration during respiratory activity. Contributes to the induction of sneezing following exposure to chemical irritants or allergens which causes release of NMB by nasal sensory neurons and activation of NMBR-expressing neurons in the sneeze-evoking region of the brainstem. These in turn activate neurons of the caudal ventral respiratory group, giving rise to the sneezing response. Contributes to induction of acute itch, possibly through activation of the NMBR receptor on dorsal root ganglion neurons. Increases expression of NMBR and steroidogenic mediators STAR, CYP11A1 and HSD3B1 in Leydig cells, induces secretion of testosterone by Leydig cells and also promotes Leydig cell proliferation. Plays a role in the innate immune response to influenza A virus infection by enhancing interferon alpha expression and reducing expression of IL6. Plays a role in CSF1-induced proliferation of osteoclast precursors by contributing to the positive regulation of the expression of the CSF1 receptor CSF1R. The polypeptide is Neuromedin-B (NMB) (Homo sapiens (Human)).